The sequence spans 132 residues: Intraflagellar transport protein 20 homolog (132 aa).

The tract at residues M70–K132 is IFT57-binding. Residues G74–L114 adopt a coiled-coil conformation.

Component of the IFT complex B, at least composed of IFT20, IFT22, IFT25, IFT27, IFT46, IFT52, TRAF3IP1/IFT54, IFT57, IFT74, IFT80, IFT81, and IFT88. Interacts directly with IFT57 and KIF3B/Kinesin II subunit. Interacts with IFT88. Interacts with CEP83. Interacts with SPEF2 (via C-terminus). Interacts with CBL and CBLB. Interacts with TRIP11. Interacts with TTC21A. Interacts with SPATA1. Interacts with USH1G. Interacts with CCDC146. Interacts with CEP78; regulating IFT20 stability and localization. As to expression, expressed in almost all tissues.

It is found in the golgi apparatus. It localises to the cis-Golgi network. Its subcellular location is the cytoplasm. The protein localises to the cytoskeleton. The protein resides in the microtubule organizing center. It is found in the centrosome. It localises to the centriole. Its subcellular location is the cilium basal body. The protein localises to the cell projection. The protein resides in the cilium. It is found in the cytoplasmic vesicle. It localises to the secretory vesicle. Its subcellular location is the acrosome. Part of intraflagellar transport (IFT) particles involved in ciliary process assembly. May play a role in the trafficking of ciliary membrane proteins from the Golgi complex to the cilium. Regulates the platelet-derived growth factor receptor-alpha (PDGFRA) signaling pathway. Required for protein stability of E3 ubiquitin ligases CBL and CBLB that mediate ubiquitination and internalization of PDGFRA for proper feedback inhibition of PDGFRA signaling. Essential for male fertility. Plays an important role in spermatogenesis, particularly spermiogenesis, when germ cells form flagella. May play a role in the transport of flagellar proteins ODF2 and SPAG16 to build sperm flagella and in the removal of redundant sperm cytoplasm. Also involved in autophagy since it is required for trafficking of ATG16L and the expansion of the autophagic compartment. The polypeptide is Intraflagellar transport protein 20 homolog (IFT20) (Homo sapiens (Human)).